Consider the following 170-residue polypeptide: Small ribosomal subunit protein uS5 (170 aa).

The S5 DRBM domain occupies 12-75 (WSELLVSVRR…NAAKKSMIRV (64 aa)).

This sequence belongs to the universal ribosomal protein uS5 family. As to quaternary structure, part of the 30S ribosomal subunit. Contacts proteins S4 and S8.

In terms of biological role, with S4 and S12 plays an important role in translational accuracy. Functionally, located at the back of the 30S subunit body where it stabilizes the conformation of the head with respect to the body. In Wolbachia sp. subsp. Brugia malayi (strain TRS), this protein is Small ribosomal subunit protein uS5.